A 610-amino-acid chain; its full sequence is UvrABC system protein C (610 aa).

The 79-residue stretch at 16-94 (NQPGVYRMYD…IKRYQPRYNV (79 aa)) folds into the GIY-YIG domain. One can recognise a UVR domain in the interval 204–239 (SQVIDALVARMEEASRALRFEEAARLRDQIQAVRRV).

It belongs to the UvrC family. As to quaternary structure, interacts with UvrB in an incision complex.

The protein resides in the cytoplasm. Its function is as follows. The UvrABC repair system catalyzes the recognition and processing of DNA lesions. UvrC both incises the 5' and 3' sides of the lesion. The N-terminal half is responsible for the 3' incision and the C-terminal half is responsible for the 5' incision. The protein is UvrABC system protein C of Edwardsiella ictaluri (strain 93-146).